The sequence spans 753 residues: Elongin-A2 (753 aa).

Positions 5–80 (STTLHAVEKL…ARWKKLVLVD (76 aa)) constitute a TFIIS N-terminal domain. Disordered stretches follow at residues 80 to 245 (DRNT…DWHS), 261 to 453 (ETPR…GPKT), and 477 to 497 (LSDS…SPKF). Composition is skewed to basic and acidic residues over residues 147–157 (HSREPRAERKC) and 271–285 (ARDR…DKEG). Positions 306 to 317 (KRPQHSHSNKKR) are enriched in basic residues. Positions 333–348 (SPEEKEQLSNDRETQE) are enriched in basic and acidic residues. A compositionally biased stretch (acidic residues) spans 366–377 (EVEEVDMAEEFE). Residues 409-428 (DKQRKANESKGTRESWDSAK) show a composition bias toward basic and acidic residues. Residues 500–659 (EAAFPGRRVN…TPYDTSRRQE (160 aa)) form an activation domain region. The segment at 528–537 (TLRQQCAQVL) is BC-box. Residues 528–537 (TLRQQCAQVL) are interacting with Elongin BC complex. A disordered region spans residues 650–735 (TPYDTSRRQE…KTRKQAAKKV (86 aa)). Residues 654–663 (TSRRQEKSAG) are compositionally biased toward basic and acidic residues. The segment covering 680–700 (GSSHTPSSQSSSGGGRDSSSS) has biased composition (low complexity).

As to quaternary structure, heterotrimer of an A (ELOA, ELOA2 or ELOA3P), ELOB and ELOC subunit. Specifically expressed in testis.

It localises to the nucleus. Functionally, SIII, also known as elongin, is a general transcription elongation factor that increases the RNA polymerase II transcription elongation past template-encoded arresting sites. Subunit A2 is transcriptionally active but its transcription activity is not enhanced by binding to the dimeric complex of the SIII regulatory subunits B and C (elongin BC complex). This Homo sapiens (Human) protein is Elongin-A2.